We begin with the raw amino-acid sequence, 537 residues long: Zinc metalloproteinase nas-23 (537 aa).

An N-terminal signal peptide occupies residues M1–G16. A propeptide spanning residues V17–R111 is cleaved from the precursor. N77 carries an N-linked (GlcNAc...) asparagine glycan. The region spanning N116–E311 is the Peptidase M12A domain. 6 disulfides stabilise this stretch: C156-C310, C178-C199, C314-C334, C336-C345, C356-C385, and C412-C433. Residue H207 coordinates Zn(2+). The active site involves E208. Positions 211 and 217 each coordinate Zn(2+). The EGF-like domain occupies R306–K346. In terms of domain architecture, CUB spans C356–G471. N481 carries N-linked (GlcNAc...) asparagine glycosylation.

The cofactor is Zn(2+). As to expression, expressed in the hypodermis, rectum and to a lesser extent in pharyngeal muscles and intestine.

It is found in the secreted. Its function is as follows. Metalloprotease. The sequence is that of Zinc metalloproteinase nas-23 (nas-23) from Caenorhabditis elegans.